Reading from the N-terminus, the 273-residue chain is Nitrogenase iron protein (273 aa).

8 to 15 contacts ATP; sequence GKGGIGKS. Position 95 (C95) interacts with [4Fe-4S] cluster. R98 carries the ADP-ribosylarginine; by dinitrogenase reductase ADP-ribosyltransferase modification. A [4Fe-4S] cluster-binding site is contributed by C130.

Belongs to the NifH/BchL/ChlL family. As to quaternary structure, homodimer. [4Fe-4S] cluster serves as cofactor. In terms of processing, the reversible ADP-ribosylation of Arg-98 inactivates the nitrogenase reductase and regulates nitrogenase activity.

The enzyme catalyses N2 + 8 reduced [2Fe-2S]-[ferredoxin] + 16 ATP + 16 H2O = H2 + 8 oxidized [2Fe-2S]-[ferredoxin] + 2 NH4(+) + 16 ADP + 16 phosphate + 6 H(+). Functionally, the key enzymatic reactions in nitrogen fixation are catalyzed by the nitrogenase complex, which has 2 components: the iron protein and the molybdenum-iron protein. The sequence is that of Nitrogenase iron protein from Methanosarcina mazei (strain ATCC BAA-159 / DSM 3647 / Goe1 / Go1 / JCM 11833 / OCM 88) (Methanosarcina frisia).